The chain runs to 453 residues: Charged multivesicular body protein 7 (453 aa).

Residues Met-1–Pro-22 form a disordered region. The segment covering Ala-10–Pro-22 has biased composition (low complexity). Ser-232 is subject to Phosphoserine. Residues Gln-243–Ile-312 are a coiled coil. Positions Thr-392–Arg-403 are enriched in basic and acidic residues. Disordered regions lie at residues Thr-392–Ser-417 and Ser-431–Leu-453. The residue at position 408 (Thr-408) is a Phosphothreonine. A phosphoserine mark is found at Ser-410, Ser-417, Ser-431, and Ser-441.

This sequence belongs to the SNF7 family. In terms of assembly, interacts with CHMP4B, but not with VPS25. Interacts with LEMD2 (via C-terminus).

It is found in the cytoplasm. It localises to the nucleus envelope. Its function is as follows. ESCRT-III-like protein required to recruit the ESCRT-III complex to the nuclear envelope (NE) during late anaphase. Together with SPAST, the ESCRT-III complex promotes NE sealing and mitotic spindle disassembly during late anaphase. Recruited to the reforming NE during anaphase by LEMD2. Plays a role in the endosomal sorting pathway. This is Charged multivesicular body protein 7 (CHMP7) from Homo sapiens (Human).